We begin with the raw amino-acid sequence, 370 residues long: Putative F-box protein At1g47390 (370 aa).

Residues 1 to 47 enclose the F-box domain; sequence MAPEEKLPCELIEEILSRVPPESLVRFRTVSKKWNALFDDKMFINNH.

This is Putative F-box protein At1g47390 from Arabidopsis thaliana (Mouse-ear cress).